Reading from the N-terminus, the 79-residue chain is Conotoxin ArMSGL-0122 (79 aa).

Positions 1–20 (MSRLGIMVLTLLLLVFIVTS) are cleaved as a signal peptide. Residues 21–44 (HQDAGEKQATQRAAINFRWKRSLT) constitute a propeptide that is removed on maturation. 3 cysteine pairs are disulfide-bonded: cysteine 52-cysteine 64, cysteine 56-cysteine 73, and cysteine 63-cysteine 77. At leucine 78 the chain carries Leucine amide.

It belongs to the conotoxin O3 superfamily. In terms of tissue distribution, expressed by the venom duct.

The protein resides in the secreted. The polypeptide is Conotoxin ArMSGL-0122 (Conus arenatus (Sand-dusted cone)).